Consider the following 632-residue polypeptide: tRNA uridine 5-carboxymethylaminomethyl modification enzyme MnmG (632 aa).

Residues 15–20 (GAGHAG), Ile-127, and Ser-182 contribute to the FAD site. Position 276–290 (276–290 (GPRYCPSIEDKIVRF)) interacts with NAD(+). Residue Gln-373 participates in FAD binding.

Belongs to the MnmG family. As to quaternary structure, homodimer. Heterotetramer of two MnmE and two MnmG subunits. Requires FAD as cofactor.

The protein localises to the cytoplasm. NAD-binding protein involved in the addition of a carboxymethylaminomethyl (cmnm) group at the wobble position (U34) of certain tRNAs, forming tRNA-cmnm(5)s(2)U34. The protein is tRNA uridine 5-carboxymethylaminomethyl modification enzyme MnmG of Streptococcus pyogenes serotype M12 (strain MGAS2096).